Here is a 1006-residue protein sequence, read N- to C-terminus: Unconventional myosin-Id (1006 aa).

Ala2 carries the N-acetylalanine modification. Residues 9–695 form the Myosin motor domain; it reads FGKADFVLMD…TLFTLEELRA (687 aa). Residue 102–109 participates in ATP binding; that stretch reads GESGAGKT. Position 200 is a phosphoserine (Ser200). Position 536 is a phosphotyrosine (Tyr536). The interval 572–594 is actin-binding; that stretch reads MIALVDNLASKEPYYVRCIKPND. IQ domains are found at residues 699–719 and 721–741; these read VRVV…MRYK and TKAA…SYIH. The region spanning 812–1005 is the TH1 domain; the sequence is GQRADLGLQR…RSGFILSVPG (194 aa).

This sequence belongs to the TRAFAC class myosin-kinesin ATPase superfamily. Myosin family. As to quaternary structure, interacts (via the two IQ motifs) with calmodulin. Binds an additional calmodulin chain via a third, C-terminal region. Interacts with F-actin. Detected in enterocytes at the intestinal brush border membrane. Detected at the tip of intestinal microvilli (at protein level).

Its subcellular location is the cytoplasm. It is found in the perikaryon. The protein resides in the cell projection. The protein localises to the dendrite. It localises to the early endosome. Its subcellular location is the cell cortex. It is found in the basolateral cell membrane. Its function is as follows. Unconventional myosin that functions as actin-based motor protein with ATPase activity. Plays a role in endosomal protein trafficking, and especially in the transfer of cargo proteins from early to recycling endosomes. Required for normal planar cell polarity in ciliated tracheal cells, for normal rotational polarity of cilia, and for coordinated, unidirectional ciliary movement in the trachea. Required for normal, polarized cilia organization in brain ependymal epithelial cells. This is Unconventional myosin-Id from Mus musculus (Mouse).